The following is a 365-amino-acid chain: Histidinol-phosphate aminotransferase (365 aa).

Lys227 bears the N6-(pyridoxal phosphate)lysine mark.

This sequence belongs to the class-II pyridoxal-phosphate-dependent aminotransferase family. Histidinol-phosphate aminotransferase subfamily. Homodimer. Pyridoxal 5'-phosphate serves as cofactor.

The catalysed reaction is L-histidinol phosphate + 2-oxoglutarate = 3-(imidazol-4-yl)-2-oxopropyl phosphate + L-glutamate. Its pathway is amino-acid biosynthesis; L-histidine biosynthesis; L-histidine from 5-phospho-alpha-D-ribose 1-diphosphate: step 7/9. The chain is Histidinol-phosphate aminotransferase from Campylobacter concisus (strain 13826).